Here is a 243-residue protein sequence, read N- to C-terminus: Probable HTH-type transcriptional regulator GfsR (243 aa).

A disordered region spans residues 154–179 (AAVARPDTSGSATGRTGDSSPSLALS). Polar residues predominate over residues 161-178 (TSGSATGRTGDSSPSLAL). The region spanning 171-236 (DSSPSLALSP…QALLRWLGHP (66 aa)) is the HTH luxR-type domain. The H-T-H motif DNA-binding region spans 195–214 (VREIAVEMRLAEKTVRNYLS).

It functions in the pathway antibiotic biosynthesis. In terms of biological role, probable DNA-binding protein that contributes to the control of expression of the biosynthesis operon of the 16-membered macrolide antibiotics FD-891 and FD-892. Might be a member of a two-component regulatory system; the putative sensor kinase gene is unknown. In Streptomyces halstedii, this protein is Probable HTH-type transcriptional regulator GfsR.